Consider the following 550-residue polypeptide: Pectinesterase 2.1 (550 aa).

A glycan (N-linked (GlcNAc...) asparagine) is linked at N179. Residues T312 and Q342 each coordinate substrate. Cysteines 331 and 358 form a disulfide. The active-site Proton donor is D365. The Nucleophile role is filled by D386. C399 and C433 are disulfide-bonded. 2 residues coordinate substrate: R454 and W456.

This sequence in the N-terminal section; belongs to the PMEI family. In the C-terminal section; belongs to the pectinesterase family.

The protein localises to the secreted. It is found in the cell wall. The enzyme catalyses [(1-&gt;4)-alpha-D-galacturonosyl methyl ester](n) + n H2O = [(1-&gt;4)-alpha-D-galacturonosyl](n) + n methanol + n H(+). Its pathway is glycan metabolism; pectin degradation; 2-dehydro-3-deoxy-D-gluconate from pectin: step 1/5. Pectinesterase may play a role in cell wall metabolism during fruit growth and development prior to ripening and may be required for preparing cell walls for softening by polygalacturonase during fruit ripening. The sequence is that of Pectinesterase 2.1 (PME2.1) from Solanum lycopersicum (Tomato).